Consider the following 861-residue polypeptide: ToMV susceptible protein tm-2 (861 aa).

A coiled-coil region spans residues 63 to 83; the sequence is VKNLLKDIQELAGDVEDLLDD. The 227-residue stretch at 162-388 folds into the NB-ARC domain; it reads DDFNMLQAKL…LESMGHKVQD (227 aa). 185 to 192 provides a ligand contact to ATP; it reads GMPGLGKT. LRR repeat units lie at residues 225–248, 305–327, 388–411, 449–472, 510–536, 585–608, 609–631, 652–680, 689–713, 735–758, 781–804, and 810–835; these read LDIAKQIGLTEQKIKENLEDNLRS, LHALQPLESEKSFELFTKKIFNF, DGCAKVLALSYNDLPIASRPCFLY, LAEDVLNDLVSRNLIQLAKRTYNG, VARLRRITFYSDNVMIEFFGSNPKLEK, MTCLRYLKLEGNICGKLPNSIVKL, TRLETIDIDRRSLIQLPSGVWES, ISSFYPNIYSLHPNNLQTLMWIPDKFFEP, LRKLGILGVSNSTVKILSTCRPVPK, YPKIVKLHLNVDRTIALNSEAFPP, LPKLRKLKMVICKYNEEKMALSGE, and FPQLEVLHIHSPNGLSEVTCTDDVSM.

Belongs to the disease resistance NB-LRR family. In terms of assembly, (Microbial infection) Fails to interact with the tobamovirus mouvement protein of tobacco mosaic virus (TMV).

The protein resides in the cell membrane. In terms of biological role, potential inhibitor of viral mouvements which may confer resistance to some tobamoviruses but not to the tomato mosaic virus (ToMV) and tobacco mosaic virus (TMV). The chain is ToMV susceptible protein tm-2 from Solanum lycopersicum (Tomato).